The chain runs to 74 residues: MFTMKKSLLVLFFLGTISLSLCEEERNADEDDGEMTEEEKRGLLSTFKQVGISALQGAAQGLLNTLSCKIAKTC.

Positions 1-22 (MFTMKKSLLVLFFLGTISLSLC) are cleaved as a signal peptide. Positions 23–39 (EEERNADEDDGEMTEEE) are cleaved as a propeptide — removed in mature form. Residues C68 and C74 are joined by a disulfide bond.

This sequence belongs to the frog skin active peptide (FSAP) family. Brevinin subfamily. Expressed by the skin glands.

It is found in the secreted. Antimicrobial peptide. Active against a variety of Gram-negative and Gram-positive bacterial strains. Active against fungi. Shows hemolytic activity against human erythrocytes. The polypeptide is Brevinin-2MT1 (Amolops mantzorum (Sichuan torrent frog)).